Reading from the N-terminus, the 629-residue chain is MPIKILSPQLANQIAAGEVVERPASVVKELVENSLDAGANKIQIDIENGGANLIRIRDNGCGIPKEELSLALARHATSKIADLDDLEAILSLGFRGEALASISSVSRLTLTSRTEEQTEAWQVYAQGRDMETTIKPASHPVGTTVEVANLFFNTPARRKFLRTDKTEFAHIDEVIRRIALTKFNTAFTLTHNGKIIRQYRPAEELNQQLKRVAAICGDDFVKNALRIDWKHDDLHLSGWVAKPNFSRTQNDLSYCYINGRMVRDKVISHAIRQAYAQYLPTDAYPAFVLFIDLNPHDVDVNVHPTKHEVRFHQQRLIHDFIYEGISYALNNQEQLNWHTDQSAVENHEENTVREPQPNYSIRPNRAAAGQNSFAPQYHEKPQQNQPHFSNTPVFPNHVSTGYRDYRSDAPSKIEQRLYAELLRTLPPTAQKDISDTAQQNISDTAKIISTEIIECSSHLRALSLIENRALLLQQNQDFFLLSLEKLQRLQWQLALKQIQIEQQPLLIPIVFRLTEAQFQAWQQYSDNFKKIGFEFIENQAQLRLTLNKVPSALRTQNLQKCVMAMLTRDENSSSFLTALCAQLECKTFNTLADALNLLSETERLLTQTNRTAFTQLLKPVNWQPLLDEI.

It belongs to the DNA mismatch repair MutL/HexB family.

Functionally, this protein is involved in the repair of mismatches in DNA. It is required for dam-dependent methyl-directed DNA mismatch repair. May act as a 'molecular matchmaker', a protein that promotes the formation of a stable complex between two or more DNA-binding proteins in an ATP-dependent manner without itself being part of a final effector complex. This chain is DNA mismatch repair protein MutL, found in Haemophilus influenzae (strain PittGG).